We begin with the raw amino-acid sequence, 193 residues long: Ion-translocating oxidoreductase complex subunit A (193 aa).

Transmembrane regions (helical) follow at residues 5–25 (LLLFVGTVLVNNFVLVKFLGL), 39–59 (MGMGLATTFVMTLASICAWLI), 63–83 (ILIPLNLIYLRTLAFILVIAV), 102–122 (LLGIFLPLITTNCAVLGVALL), 134–154 (ALYGFSAAVGFSLVMVLFAAI), and 171–191 (AIALITAGLMSLAFMGFSGLV).

Belongs to the NqrDE/RnfAE family. In terms of assembly, the complex is composed of six subunits: RsxA, RsxB, RsxC, RsxD, RsxE and RsxG.

It is found in the cell inner membrane. Its function is as follows. Part of a membrane-bound complex that couples electron transfer with translocation of ions across the membrane. Required to maintain the reduced state of SoxR. The polypeptide is Ion-translocating oxidoreductase complex subunit A (Shigella boydii serotype 18 (strain CDC 3083-94 / BS512)).